The following is a 77-amino-acid chain: U-actitoxin-Avd12a (77 aa).

The N-terminal stretch at 1-23 (MALFRMLFLCAVLVLLTSKEGMS) is a signal peptide. A propeptide spanning residues 24-29 (YEEPEN) is cleaved from the precursor. One can recognise an EGF-like domain in the interval 31–73 (EGVACTGQYAESFCLNGGTCRYIQSIGEYYCICNGDYTGHRCE). Disulfide bonds link cysteine 35–cysteine 50, cysteine 44–cysteine 61, and cysteine 63–cysteine 72.

This sequence belongs to the EGF domain peptide family.

It localises to the secreted. The protein resides in the nematocyst. Its function is as follows. Has both toxic and EGF activity. Its EGF activity consists of rounding cells (morphological change) and inducing tyrosine phosphorylation of the EGFR in A431 cells, but with a lower potency that human EGF. The chain is U-actitoxin-Avd12a from Anemonia viridis (Snakelocks anemone).